We begin with the raw amino-acid sequence, 1292 residues long: ABC multidrug transporter MDR5 (1292 aa).

The tract at residues 1 to 43 (MTEEPKPVTPVLRDGEAGLDTTAPTEAGSLGEEAPKKEADGIV) is disordered. A run of 2 helical transmembrane segments spans residues 79 to 99 (ICGF…TIIF) and 128 to 148 (LWFV…TICF). Positions 81–370 (GFFAAVASGT…IAPTLGEFTK (290 aa)) constitute an ABC transmembrane type-1 1 domain. N-linked (GlcNAc...) asparagine glycosylation occurs at asparagine 149. A run of 4 helical transmembrane segments spans residues 202–222 (VGTC…AFTQ), 226–246 (LTLP…ITVA), 314–334 (EFFI…KLLL), and 344–364 (ILTV…IAPT). The region spanning 405–650 (LELSNAVFSY…KGQYWSLVNA (246 aa)) is the ABC transporter 1 domain. 440–447 (GASGSGKS) contacts ATP. Residue asparagine 494 is glycosylated (N-linked (GlcNAc...) asparagine). The disordered stretch occupies residues 656-691 (ASDDSSSDTDKETDTQPAEILEKHATTKSTHSKVPH). Over residues 663-680 (DTDKETDTQPAEILEKHA) the composition is skewed to basic and acidic residues. 2 consecutive transmembrane segments (helical) span residues 720–740 (HWLF…AFPA) and 768–788 (LMFF…GFFL). The 288-residue stretch at 725–1012 (LLGGIASVVS…IFGFTMNTTK (288 aa)) folds into the ABC transmembrane type-1 2 domain. N-linked (GlcNAc...) asparagine glycosylation occurs at asparagine 820. 4 consecutive transmembrane segments (helical) span residues 844-864 (IGLI…ALVT), 866-886 (WKLA…AGFI), 949-969 (IAMI…ALAF), and 986-1006 (FFVI…IFGF). N-linked (GlcNAc...) asparagine glycosylation is found at asparagine 1009, asparagine 1031, and asparagine 1052. The ABC transporter 2 domain maps to 1048-1285 (VEFRNVSFSY…KGRYFEMCKA (238 aa)). 1083–1090 (GPSGCGKT) contributes to the ATP binding site.

The protein belongs to the ABC transporter superfamily. ABCB family. Multidrug resistance exporter (TC 3.A.1.201) subfamily.

Its subcellular location is the cell membrane. It carries out the reaction itraconazole(in) + ATP + H2O = itraconazole(out) + ADP + phosphate + H(+). Its function is as follows. Pleiotropic ABC efflux transporter involved in the modulation susceptibility to itraconazole. The protein is ABC multidrug transporter MDR5 of Trichophyton rubrum (strain ATCC MYA-4607 / CBS 118892) (Athlete's foot fungus).